A 1412-amino-acid polypeptide reads, in one-letter code: DNA-directed RNA polymerase subunit beta' (1412 aa).

Positions 70, 72, 85, and 88 each coordinate Zn(2+). The Mg(2+) site is built by aspartate 460, aspartate 462, and aspartate 464. Residues cysteine 819, cysteine 893, cysteine 900, and cysteine 903 each contribute to the Zn(2+) site. Positions 1393-1412 (EAFEFGTPSAPAEEPQHPAE) are disordered.

The protein belongs to the RNA polymerase beta' chain family. As to quaternary structure, the RNAP catalytic core consists of 2 alpha, 1 beta, 1 beta' and 1 omega subunit. When a sigma factor is associated with the core the holoenzyme is formed, which can initiate transcription. Mg(2+) serves as cofactor. It depends on Zn(2+) as a cofactor.

It carries out the reaction RNA(n) + a ribonucleoside 5'-triphosphate = RNA(n+1) + diphosphate. In terms of biological role, DNA-dependent RNA polymerase catalyzes the transcription of DNA into RNA using the four ribonucleoside triphosphates as substrates. The protein is DNA-directed RNA polymerase subunit beta' of Burkholderia mallei (strain NCTC 10229).